Here is a 187-residue protein sequence, read N- to C-terminus: Ribosome-recycling factor (187 aa).

This sequence belongs to the RRF family.

Its subcellular location is the cytoplasm. Its function is as follows. Responsible for the release of ribosomes from messenger RNA at the termination of protein biosynthesis. May increase the efficiency of translation by recycling ribosomes from one round of translation to another. This Methylorubrum extorquens (strain CM4 / NCIMB 13688) (Methylobacterium extorquens) protein is Ribosome-recycling factor.